We begin with the raw amino-acid sequence, 603 residues long: Geraniol synthase Tps-5031G8, chloroplastic (603 aa).

The N-terminal 35 residues, Met1 to Ser35, are a transit peptide targeting the chloroplast. (2E)-geranyl diphosphate-binding residues include Arg319, Asp356, Asp360, Arg497, and Asp500. The Mg(2+) site is built by Asp356 and Asp360. Residues Asp356–Asp360 carry the DDXXD motif motif. Positions 500, 504, and 508 each coordinate Mg(2+).

The protein belongs to the terpene synthase family. Tpsb subfamily. Monomer. Mg(2+) serves as cofactor. It depends on Mn(2+) as a cofactor.

It localises to the plastid. It is found in the chloroplast. It carries out the reaction (2E)-geranyl diphosphate + H2O = (2E)-geraniol + diphosphate. It participates in secondary metabolite biosynthesis; terpenoid biosynthesis. In terms of biological role, monoterpene synthase (mono-TPS) involved in the biosynthesis of monoterpenes natural products. Catalyzes the conversion of (2E)-geranyl diphosphate (GPP) into geraniol. This is Geraniol synthase Tps-5031G8, chloroplastic from Perilla frutescens var. hirtella (Perilla citriodora).